The chain runs to 456 residues: Phospholipase A1 member A (456 aa).

Positions 1-25 (MPPGPWESCFWVGGLILWLSVGSSG) are cleaved as a signal peptide. The N-linked (GlcNAc...) asparagine glycan is linked to Asn79. The Nucleophile role is filled by Ser166. The active-site Charge relay system is the Asp190. A disulfide bond links Cys245 and Cys258. His260 functions as the Charge relay system in the catalytic mechanism. 2 cysteine pairs are disulfide-bonded: Cys282/Cys293 and Cys296/Cys304. Asn365 carries an N-linked (GlcNAc...) asparagine glycan. The segment at 374-456 (IPKQQRYGKG…VSCDLKIACV (83 aa)) is involved in the recognition of diacyl-phospholipids.

The protein belongs to the AB hydrolase superfamily. Lipase family. In terms of tissue distribution, widely expressed. Expressed in placenta, prostate and liver. Weakly or not expressed in skin, leukocytes, platelets, colon, spleen, lung, muscle and kidney.

Its subcellular location is the secreted. It carries out the reaction a 1,2-diacyl-sn-glycero-3-phospho-L-serine + H2O = a 2-acyl-sn-glycero-3-phospho-L-serine + a fatty acid + H(+). The catalysed reaction is 1,2-di-(9Z)-octadecenoyl-sn-glycero-3-phospho-L-serine + H2O = 2-(9Z-octadecenoyl)-sn-glycero-3-phospho-L-serine + (9Z)-octadecenoate + H(+). It catalyses the reaction 1-hexadecanoyl-2-(5Z,8Z,11Z,14Z-eicosatetraenoyl)-sn-glycero-3-phospho-L-serine + H2O = 2-(5Z,8Z,11Z,14Z)-eicosatetraenoyl-sn-glycero-3-phospho-L-serine + hexadecanoate + H(+). The enzyme catalyses a 1-acyl-sn-glycero-3-phospho-L-serine + H2O = sn-glycero-3-phospho-L-serine + a fatty acid + H(+). It carries out the reaction 1-(9Z-octadecenoyl)-sn-glycero-3-phospho-L-serine + H2O = sn-glycero-3-phospho-L-serine + (9Z)-octadecenoate + H(+). Hydrolyzes the ester bond of the acyl group attached at the sn-1 position of phosphatidylserines (phospholipase A1 activity) and 1-acyl-2-lysophosphatidylserines (lysophospholipase activity) in the pathway of phosphatidylserines acyl chain remodeling. Cleaves phosphatidylserines exposed on the outer leaflet of the plasma membrane of apoptotic cells producing 2-acyl-1-lysophosphatidylserines, which in turn enhance mast cell activation and histamine production. Has no activity toward other glycerophospholipids including phosphatidylcholines, phosphatidylethanolamines, phosphatidic acids or phosphatidylinositols, or glycerolipids such as triolein. In terms of biological role, hydrolyzes lyso-PS but not PS. The protein is Phospholipase A1 member A of Homo sapiens (Human).